We begin with the raw amino-acid sequence, 223 residues long: Ubiquitin-conjugating enzyme E2 S-A (223 aa).

Positions 11–157 constitute a UBC core domain; the sequence is HIIRLVYKEV…ARLLTEIHGG (147 aa). C95 acts as the Glycyl thioester intermediate in catalysis. Residues 170–223 are disordered; it reads QDLASGASASSADPMIPGVLGGAEGPMAKKHAGERDKKLAAKKKLDKKRALRRL. The span at 209 to 223 shows a compositional bias: basic residues; it reads AAKKKLDKKRALRRL.

It belongs to the ubiquitin-conjugating enzyme family.

The catalysed reaction is S-ubiquitinyl-[E1 ubiquitin-activating enzyme]-L-cysteine + [E2 ubiquitin-conjugating enzyme]-L-cysteine = [E1 ubiquitin-activating enzyme]-L-cysteine + S-ubiquitinyl-[E2 ubiquitin-conjugating enzyme]-L-cysteine.. It functions in the pathway protein modification; protein ubiquitination. Functionally, catalyzes the covalent attachment of ubiquitin to other proteins. Acts as an essential factor of the anaphase promoting complex/cyclosome (APC/C), a cell cycle-regulated ubiquitin ligase that controls progression through mitosis. Acts by specifically elongating 'Lys-11'-linked polyubiquitin chains initiated by the E2 enzyme ube2c/ubch10 on APC/C substrates, enhancing the degradation of APC/C substrates by the proteasome and promoting mitotic exit. This Xenopus laevis (African clawed frog) protein is Ubiquitin-conjugating enzyme E2 S-A (ube2s-a).